A 118-amino-acid chain; its full sequence is Ribonuclease P protein component (118 aa).

The protein belongs to the RnpA family. As to quaternary structure, consists of a catalytic RNA component (M1 or rnpB) and a protein subunit.

It catalyses the reaction Endonucleolytic cleavage of RNA, removing 5'-extranucleotides from tRNA precursor.. Its function is as follows. RNaseP catalyzes the removal of the 5'-leader sequence from pre-tRNA to produce the mature 5'-terminus. It can also cleave other RNA substrates such as 4.5S RNA. The protein component plays an auxiliary but essential role in vivo by binding to the 5'-leader sequence and broadening the substrate specificity of the ribozyme. This is Ribonuclease P protein component from Shewanella frigidimarina (strain NCIMB 400).